A 452-amino-acid polypeptide reads, in one-letter code: MRECISVHVGQAGVQIGNACWELYCLEHGIQPDGQMPSDKTIGGGDDSFNTFFSETGAGKHVPRAVFVDLEPTVIDEVRTGTYRQLFHPEQLITGKEDAANNYARGHYTIGKELIDLVLDRIRKLADQCTGLQGFLIFHSFGGGTGSGFTSLLMERLSVDYGKKSKLEFSIYPAPQVSTAVVEPYNSILTTHTTLEHSDCAFMVDNEAIYDICRRNLDIERPTYTNLNRLIGQIVSSITASLRFDGALNVDLTEFQTNLVPYPRIHFPLATYAPVISAEKAYHEQLSVAEITNACFEPANQMVKCDPRHGKYMACCLLYRGDVVPKDVNAAIATIKTKRTIQFVDWCPTGFKVGINYQPPTVVPGGDLAKVQRAVCMLSNTTAIAEAWARLDHKFDLMYAKRAFVHWYVGEGMEEGEFSEAREDMAALEKDYEEVGMDSVEGEGEEEEGDEY.

Positions 1-4 (MREC) match the MREC motif motif. A GTP-binding site is contributed by Q11. At K40 the chain carries N6-acetyllysine. Residues E71, S140, G144, T145, T179, N206, and N228 each coordinate GTP. E71 lines the Mg(2+) pocket. Residue E254 is part of the active site. At Y282 the chain carries 3'-nitrotyrosine. The segment at 432 to 452 (YEEVGMDSVEGEGEEEEGDEY) is disordered. Phosphoserine is present on S439. E446 carries the post-translational modification 5-glutamyl polyglutamate. Position 452 is a 3'-nitrotyrosine (Y452).

The protein belongs to the tubulin family. In terms of assembly, dimer of alpha and beta chains. A typical microtubule is a hollow water-filled tube with an outer diameter of 25 nm and an inner diameter of 15 nM. Alpha-beta heterodimers associate head-to-tail to form protofilaments running lengthwise along the microtubule wall with the beta-tubulin subunit facing the microtubule plus end conferring a structural polarity. Microtubules usually have 13 protofilaments but different protofilament numbers can be found in some organisms and specialized cells. Mg(2+) is required as a cofactor. In terms of processing, some glutamate residues at the C-terminus are polyglycylated, resulting in polyglycine chains on the gamma-carboxyl group. Glycylation is mainly limited to tubulin incorporated into axonemes (cilia and flagella) whereas glutamylation is prevalent in neuronal cells, centrioles, axonemes, and the mitotic spindle. Both modifications can coexist on the same protein on adjacent residues, and lowering polyglycylation levels increases polyglutamylation, and reciprocally. Cilia and flagella glycylation is required for their stability and maintenance. Flagella glycylation controls sperm motility. Post-translationally, some glutamate residues at the C-terminus are polyglutamylated, resulting in polyglutamate chains on the gamma-carboxyl group. Polyglutamylation plays a key role in microtubule severing by spastin (SPAST). SPAST preferentially recognizes and acts on microtubules decorated with short polyglutamate tails: severing activity by SPAST increases as the number of glutamates per tubulin rises from one to eight, but decreases beyond this glutamylation threshold. Glutamylation is also involved in cilia motility. Acetylation of alpha chains at Lys-40 is located inside the microtubule lumen. This modification has been correlated with increased microtubule stability, intracellular transport and ciliary assembly. In terms of processing, methylation of alpha chains at Lys-40 is found in mitotic microtubules and is required for normal mitosis and cytokinesis contributing to genomic stability. Post-translationally, nitration of Tyr-452 is irreversible and interferes with normal dynein intracellular distribution. Undergoes a tyrosination/detyrosination cycle, the cyclic removal and re-addition of a C-terminal tyrosine residue by the enzymes tubulin tyrosine carboxypeptidase (MATCAP, VASH1 or VASH2) and tubulin tyrosine ligase (TTL), respectively. In terms of processing, tyrosination promotes microtubule interaction with CAP-Gly domain-containing proteins such as CLIP1, CLIP2 and DCTN1. Tyrosination regulates the initiation of dynein-dynactin motility via interaction with DCTN1, which brings the dynein-dynactin complex into contact with microtubules. In neurons, tyrosinated tubulins mediate the initiation of retrograde vesicle transport. Post-translationally, detyrosination is involved in metaphase plate congression by guiding chromosomes during mitosis: detyrosination promotes interaction with CENPE, promoting pole-proximal transport of chromosomes toward the equator. Detyrosination increases microtubules-dependent mechanotransduction in dystrophic cardiac and skeletal muscle. In cardiomyocytes, detyrosinated microtubules are required to resist to contractile compression during contraction: detyrosination promotes association with desmin (DES) at force-generating sarcomeres, leading to buckled microtubules and mechanical resistance to contraction.

It is found in the cytoplasm. It localises to the cytoskeleton. The enzyme catalyses GTP + H2O = GDP + phosphate + H(+). Functionally, tubulin is the major constituent of microtubules, a cylinder consisting of laterally associated linear protofilaments composed of alpha- and beta-tubulin heterodimers. Microtubules grow by the addition of GTP-tubulin dimers to the microtubule end, where a stabilizing cap forms. Below the cap, tubulin dimers are in GDP-bound state, owing to GTPase activity of alpha-tubulin. The sequence is that of Tubulin alpha-1D chain (TUBA1D) from Bos taurus (Bovine).